The sequence spans 2049 residues: Nonribosomal peptide synthetase tcpP (2049 aa).

Positions 13-395 (RHHAEAHPEA…LGRKDQLIKN (383 aa)) are adenylation 1. Positions 497-573 (ATADTKLSAL…EISNHIIEFD (77 aa)) constitute a Carrier 1 domain. S534 is modified (O-(pantetheine 4'-phosphoryl)serine). A condensation 1 region spans residues 605 to 913 (REITMTDVQR…ALGSKMDLLS (309 aa)). The adenylation 2 stretch occupies residues 1071–1452 (VAAWPMSVAL…GRADHQVKVR (382 aa)). Positions 1550–1625 (DHTELVVSQV…SLAASVKKHL (76 aa)) constitute a Carrier 2 domain. S1585 is modified (O-(pantetheine 4'-phosphoryl)serine). The interval 1662–2044 (MHKQASNPSS…FEQEICNLLD (383 aa)) is condensation 2.

This sequence belongs to the NRP synthetase family.

Its pathway is secondary metabolite biosynthesis. Functionally, nonribosomal peptide synthetase; part of the gene cluster that mediates the biosynthesis of an unusual class of epipolythiodioxopiperazines (ETPs) lacking the reactive thiol group important for toxicity. Firstly, L-tyrosine is prenylated by tcpD, before undergoing condensation with L-glycine in a reaction catalyzed by the NRPS tcpP leading to the diketopiperazine (DKP) backbone. Afterwards the alpha-carbon of tyrosine is oxidized by the cytochrome P450 tcpC to form a hydroxyl group. However, in contrast other ETP biosynthesis pathways studied so far, tcpC is not able to bishydroxylate the DKP at both alpha-carbon positions, but hydroxylates the alpha-carbon of the tyrosine part and the nitrogen of the glycine part. The next steps involve an alpha,beta-elimination reaction catalyzed by tcpI, a methylation by the methyltransferase tcpN the action of the four enzyme cascade tcpG/K/J/I. Due to a dysfunctional cytochrome P450 monooxygenase tcpC, the pathway leads to the biosynthesis of probable non-toxic metabolites lacking the reactive thiol group. The sequence is that of Nonribosomal peptide synthetase tcpP from Claviceps purpurea (strain 20.1) (Ergot fungus).